Consider the following 163-residue polypeptide: Nucleotide-binding protein HD_0358 (163 aa).

The protein belongs to the YajQ family.

In terms of biological role, nucleotide-binding protein. The polypeptide is Nucleotide-binding protein HD_0358 (Haemophilus ducreyi (strain 35000HP / ATCC 700724)).